A 430-amino-acid chain; its full sequence is ATP-dependent RNA helicase RhlB (430 aa).

A Q motif motif is present at residues 9–37 (QKFSDFALHPQVIEALESKGFHNCTPIQA). Residues 40–219 (LPLALSGRDV…FEQMNNAEYV (180 aa)) enclose the Helicase ATP-binding domain. 53–60 (AQTGTGKT) contributes to the ATP binding site. The DEAD box signature appears at 165–168 (DEAD). One can recognise a Helicase C-terminal domain in the interval 245 to 390 (RLLQTLLEEE…VSKYNSDALM (146 aa)). Positions 392 to 430 (DLPAPKRLTRPPRSNNGPRRHNNAPRRSGAPRNNRKRAD) are disordered.

Belongs to the DEAD box helicase family. RhlB subfamily. In terms of assembly, component of the RNA degradosome, which is a multiprotein complex involved in RNA processing and mRNA degradation.

Its subcellular location is the cytoplasm. The enzyme catalyses ATP + H2O = ADP + phosphate + H(+). DEAD-box RNA helicase involved in RNA degradation. Has RNA-dependent ATPase activity and unwinds double-stranded RNA. The sequence is that of ATP-dependent RNA helicase RhlB from Pectobacterium carotovorum subsp. carotovorum (strain PC1).